The primary structure comprises 114 residues: Immunomodulatory protein FIP-Fve (114 aa).

The residue at position 1 (S1) is an N-acetylserine.

The protein belongs to the fungal immunomodulatory protein (FIP) family. In terms of assembly, homodimer.

Functionally, lectin with specificity for complex cell-surface carbohydrates. Possesses immunomodulatory activity, stimulates lymphocyte mitogenesis, suppresses systemic anaphylaxis reactions and edema, enhances transcription of IL-2, IFN-gamma and TNF-alpha and hemagglutinates red blood cells. This Flammulina velutipes (Agaricus velutipes) protein is Immunomodulatory protein FIP-Fve.